The chain runs to 360 residues: Ferrochelatase (360 aa).

Residues H210 and E291 each contribute to the Fe cation site.

Belongs to the ferrochelatase family.

It localises to the cytoplasm. The enzyme catalyses heme b + 2 H(+) = protoporphyrin IX + Fe(2+). The protein operates within porphyrin-containing compound metabolism; protoheme biosynthesis; protoheme from protoporphyrin-IX: step 1/1. In terms of biological role, catalyzes the ferrous insertion into protoporphyrin IX. The protein is Ferrochelatase of Pseudoalteromonas atlantica (strain T6c / ATCC BAA-1087).